Reading from the N-terminus, the 153-residue chain is Sec-independent protein translocase protein TatB (153 aa).

The helical transmembrane segment at 1–21 (MFGISFSELLLVGLVALLVLG) threads the bilayer. The tract at residues 78 to 153 (MFAQNQHPET…HDSSLPPRAP (76 aa)) is disordered.

It belongs to the TatB family. As to quaternary structure, the Tat system comprises two distinct complexes: a TatABC complex, containing multiple copies of TatA, TatB and TatC subunits, and a separate TatA complex, containing only TatA subunits. Substrates initially bind to the TatABC complex, which probably triggers association of the separate TatA complex to form the active translocon.

The protein localises to the cell inner membrane. Part of the twin-arginine translocation (Tat) system that transports large folded proteins containing a characteristic twin-arginine motif in their signal peptide across membranes. Together with TatC, TatB is part of a receptor directly interacting with Tat signal peptides. TatB may form an oligomeric binding site that transiently accommodates folded Tat precursor proteins before their translocation. The polypeptide is Sec-independent protein translocase protein TatB (Pseudomonas savastanoi pv. phaseolicola (strain 1448A / Race 6) (Pseudomonas syringae pv. phaseolicola (strain 1448A / Race 6))).